The sequence spans 356 residues: Outer membrane protein Omp38 (356 aa).

A signal peptide spans 1–19 (MKLSRIALATMLVAAPLAA). Residues 221–339 (ELTEDLNMEL…RVFATITGSR (119 aa)) enclose the OmpA-like domain. Residues Asn-237, Asp-271, Thr-273, Asn-279, and Arg-286 each coordinate meso-2,6-diaminopimelate.

It belongs to the outer membrane OOP (TC 1.B.6) superfamily. In terms of assembly, homotrimer. Forms a pore with a size of 1.3 nm.

Its subcellular location is the cell outer membrane. The protein resides in the host mitochondrion. Functionally, functions as a porin. Induces apoptosis in human cell lines through caspase-dependent and AIF-dependent pathways. Purified Omp38 enters host cell and localizes to the mitochondria, which presumably leads to a release of proapoptotic molecules such as cytochrome c and AIF (apoptosis-inducing factor). Binds peptidoglycan, contributes to cell wall maintenance. The chain is Outer membrane protein Omp38 from Acinetobacter baumannii (strain ATCC 19606 / DSM 30007 / JCM 6841 / CCUG 19606 / CIP 70.34 / NBRC 109757 / NCIMB 12457 / NCTC 12156 / 81).